Consider the following 561-residue polypeptide: DNA ligase B (561 aa).

Catalysis depends on Lys-125, which acts as the N6-AMP-lysine intermediate.

The protein belongs to the NAD-dependent DNA ligase family. LigB subfamily.

It carries out the reaction NAD(+) + (deoxyribonucleotide)n-3'-hydroxyl + 5'-phospho-(deoxyribonucleotide)m = (deoxyribonucleotide)n+m + AMP + beta-nicotinamide D-nucleotide.. Its function is as follows. Catalyzes the formation of phosphodiester linkages between 5'-phosphoryl and 3'-hydroxyl groups in double-stranded DNA using NAD as a coenzyme and as the energy source for the reaction. The sequence is that of DNA ligase B from Salmonella choleraesuis (strain SC-B67).